We begin with the raw amino-acid sequence, 247 residues long: Neurotrophic factor BDNF precursor form (247 aa).

A signal peptide spans 1 to 18 (MTILFLTMVISYFGCMKA). A propeptide spanning residues 19–128 (APMKEASVRG…AANMSMRVRR (110 aa)) is cleaved from the precursor. N-linked (GlcNAc...) asparagine glycosylation occurs at Asn-121. Disulfide bonds link Cys-141/Cys-208, Cys-186/Cys-237, and Cys-196/Cys-239.

It belongs to the NGF-beta family. As to quaternary structure, monomers and homodimers. Binds to NTRK2/TRKB. Can form heterodimers with other neurotrophin family members, such as NTF3 and NTF4 (in vitro), but the physiological relevance of this is not clear. BDNF precursor form: interacts with the heterodimer formed by NGFR and SORCS2. Mature BDNF has much lower affinity for the heterodimer formed by NGFR and SORCS2. In terms of processing, N-glycosylated and glycosulfated, contrary to mature BDNF. Post-translationally, mature BDNF is produced by proteolytic removal of the propeptide, catalyzed by a FURIN family member. In addition, the precursor form is proteolytically cleaved within the propeptide, but this is not an obligatory intermediate for the production of mature BDNF. Can be converted into mature BDNF by plasmin (PLG).

The protein resides in the secreted. Important signaling molecule that activates signaling cascades downstream of NTRK2. During development, promotes the survival and differentiation of selected neuronal populations of the peripheral and central nervous systems. Participates in axonal growth, pathfinding and in the modulation of dendritic growth and morphology. Major regulator of synaptic transmission and plasticity at adult synapses in many regions of the CNS. The versatility of BDNF is emphasized by its contribution to a range of adaptive neuronal responses including long-term potentiation (LTP), long-term depression (LTD), certain forms of short-term synaptic plasticity, as well as homeostatic regulation of intrinsic neuronal excitability. The polypeptide is Neurotrophic factor BDNF precursor form (BDNF) (Canis lupus familiaris (Dog)).